We begin with the raw amino-acid sequence, 389 residues long: 1-deoxy-D-xylulose 5-phosphate reductoisomerase (389 aa).

NADPH-binding residues include Ser-11, Gly-12, Ser-13, Val-14, Asn-39, and Asn-122. Lys-123 is a 1-deoxy-D-xylulose 5-phosphate binding site. Residue Glu-124 participates in NADPH binding. Asp-148 contacts Mn(2+). Positions 149, 150, 174, and 197 each coordinate 1-deoxy-D-xylulose 5-phosphate. Glu-150 serves as a coordination point for Mn(2+). Gly-203 contributes to the NADPH binding site. 1-deoxy-D-xylulose 5-phosphate-binding residues include Ser-210, Asn-215, Lys-216, and Glu-219. Glu-219 serves as a coordination point for Mn(2+).

It belongs to the DXR family. The cofactor is Mg(2+). Mn(2+) serves as cofactor.

The catalysed reaction is 2-C-methyl-D-erythritol 4-phosphate + NADP(+) = 1-deoxy-D-xylulose 5-phosphate + NADPH + H(+). The protein operates within isoprenoid biosynthesis; isopentenyl diphosphate biosynthesis via DXP pathway; isopentenyl diphosphate from 1-deoxy-D-xylulose 5-phosphate: step 1/6. Functionally, catalyzes the NADPH-dependent rearrangement and reduction of 1-deoxy-D-xylulose-5-phosphate (DXP) to 2-C-methyl-D-erythritol 4-phosphate (MEP). This is 1-deoxy-D-xylulose 5-phosphate reductoisomerase from Leptospira interrogans serogroup Icterohaemorrhagiae serovar Lai (strain 56601).